Here is a 366-residue protein sequence, read N- to C-terminus: Capsular polysaccharide phosphotransferase LcbA (366 aa).

This sequence belongs to the stealth family.

This Neisseria meningitidis protein is Capsular polysaccharide phosphotransferase LcbA (lcbA).